The sequence spans 369 residues: MTQKTILNDTHRALGAKMVDFGGWDMPIHYGSQLDEHHQVRRDAGMFDVSHMTVVDLHGARVRAFLRDLLANSVDKLKVCGKALYTCMLNPQGGVIDDLIVYYMSEDFFRLVVNAATREKDLQWIGEQAVRFDVRVEERSDFAMIAVQGPNARANVIDLLDPADTAAASKLGRFAALQTRSRDGIELFLARTGYTGEDGFEIVLPQEAAVAFWNALLAQGVKPAGLGARDTLRLEAGMHLYGQDMDDAVTPYEAALAWTIALDEGRDFIGRRVLESQKAQGAPRQLIGVVMDDKGVLRHGQAVFTASGEGEILSGTFSPTLGKAIAFARVPAGSIDQLRVDIRGKQVPLRAVKFPFVRDGQAQPGVLGD.

The protein belongs to the GcvT family. The glycine cleavage system is composed of four proteins: P, T, L and H.

It catalyses the reaction N(6)-[(R)-S(8)-aminomethyldihydrolipoyl]-L-lysyl-[protein] + (6S)-5,6,7,8-tetrahydrofolate = N(6)-[(R)-dihydrolipoyl]-L-lysyl-[protein] + (6R)-5,10-methylene-5,6,7,8-tetrahydrofolate + NH4(+). Its function is as follows. The glycine cleavage system catalyzes the degradation of glycine. This chain is Aminomethyltransferase, found in Xanthomonas oryzae pv. oryzae (strain MAFF 311018).